Reading from the N-terminus, the 443-residue chain is ATP-dependent protease ATPase subunit HslU (443 aa).

ATP is bound by residues Ile-18, 60–65 (GVGKTE), Asp-256, Glu-321, and Arg-393.

This sequence belongs to the ClpX chaperone family. HslU subfamily. As to quaternary structure, a double ring-shaped homohexamer of HslV is capped on each side by a ring-shaped HslU homohexamer. The assembly of the HslU/HslV complex is dependent on binding of ATP.

The protein resides in the cytoplasm. Functionally, ATPase subunit of a proteasome-like degradation complex; this subunit has chaperone activity. The binding of ATP and its subsequent hydrolysis by HslU are essential for unfolding of protein substrates subsequently hydrolyzed by HslV. HslU recognizes the N-terminal part of its protein substrates and unfolds these before they are guided to HslV for hydrolysis. In Salmonella typhi, this protein is ATP-dependent protease ATPase subunit HslU.